A 235-amino-acid polypeptide reads, in one-letter code: Hydroxyacylglutathione hydrolase (235 aa).

7 residues coordinate Zn(2+): His-53, His-55, Asp-57, His-58, His-109, Asp-127, and His-165.

Belongs to the metallo-beta-lactamase superfamily. Glyoxalase II family. As to quaternary structure, monomer. Zn(2+) serves as cofactor.

It carries out the reaction an S-(2-hydroxyacyl)glutathione + H2O = a 2-hydroxy carboxylate + glutathione + H(+). The protein operates within secondary metabolite metabolism; methylglyoxal degradation; (R)-lactate from methylglyoxal: step 2/2. Thiolesterase that catalyzes the hydrolysis of S-D-lactoyl-glutathione to form glutathione and D-lactic acid. This Actinobacillus pleuropneumoniae serotype 7 (strain AP76) protein is Hydroxyacylglutathione hydrolase.